A 251-amino-acid chain; its full sequence is MIVELDCGNSFIKWRIIDAFSRVLSSGVVESIEELVHALDEARTSHEFAHCRMVSVRSDDEVARLESVLAQRFGLRVSAVRPASCLAGVRNGYLNHERLGLDRWMAVVAAYRLSAGACLVLDLGTAVTADFVDADGEHRGGFICPGLPLLRRQLREHTRRIHYDAVAANDLTGGSFAPGRSTAEAVERGCVLMLRGFVASQLELAKEYWGDRFEIFLTGGDASLVADVLPRAKVVPDLIFTGLAIACPIPS.

ATP is bound at residue 6-13 (DCGNSFIK). Substrate is bound by residues Tyr93 and 100 to 103 (GLDR). The active-site Proton acceptor is the Asp102. Asp122 is a K(+) binding site. Thr125 contacts ATP. Thr182 contributes to the substrate binding site.

Belongs to the type III pantothenate kinase family. As to quaternary structure, homodimer. Requires NH4(+) as cofactor. It depends on K(+) as a cofactor.

It is found in the cytoplasm. It catalyses the reaction (R)-pantothenate + ATP = (R)-4'-phosphopantothenate + ADP + H(+). It functions in the pathway cofactor biosynthesis; coenzyme A biosynthesis; CoA from (R)-pantothenate: step 1/5. Catalyzes the phosphorylation of pantothenate (Pan), the first step in CoA biosynthesis. In Azotobacter vinelandii (strain DJ / ATCC BAA-1303), this protein is Type III pantothenate kinase.